We begin with the raw amino-acid sequence, 101 residues long: MAKLALIEREKKRARLVAKFAAKREALKAIIEDQSKSEEERYEARLELQQLPRNANPTRQRNRCAITGRPRGTFRKFGLARNKIREIAFRGEIPGLTKASW.

Belongs to the universal ribosomal protein uS14 family. As to quaternary structure, part of the 30S ribosomal subunit. Contacts proteins S3 and S10.

Binds 16S rRNA, required for the assembly of 30S particles and may also be responsible for determining the conformation of the 16S rRNA at the A site. The chain is Small ribosomal subunit protein uS14 from Burkholderia multivorans (strain ATCC 17616 / 249).